An 847-amino-acid chain; its full sequence is Protein translocase subunit SecA (847 aa).

ATP is bound by residues glutamine 87, 105 to 109, and aspartate 495; that span reads GEGKT. The disordered stretch occupies residues 828 to 847; that stretch reads SSNSPSDARNRPIEHDDNAV. Residues 835-847 show a composition bias toward basic and acidic residues; the sequence is ARNRPIEHDDNAV.

This sequence belongs to the SecA family. As to quaternary structure, monomer and homodimer. Part of the essential Sec protein translocation apparatus which comprises SecA, SecYEG and auxiliary proteins SecDF. Other proteins may also be involved.

Its subcellular location is the cell membrane. The protein resides in the cytoplasm. It catalyses the reaction ATP + H2O + cellular proteinSide 1 = ADP + phosphate + cellular proteinSide 2.. Its function is as follows. Part of the Sec protein translocase complex. Interacts with the SecYEG preprotein conducting channel. Has a central role in coupling the hydrolysis of ATP to the transfer of proteins into and across the cell membrane, serving as an ATP-driven molecular motor driving the stepwise translocation of polypeptide chains across the membrane. This chain is Protein translocase subunit SecA, found in Tropheryma whipplei (strain TW08/27) (Whipple's bacillus).